Consider the following 102-residue polypeptide: Small ribosomal subunit protein uS10 (102 aa).

The protein belongs to the universal ribosomal protein uS10 family. In terms of assembly, part of the 30S ribosomal subunit.

Functionally, involved in the binding of tRNA to the ribosomes. This is Small ribosomal subunit protein uS10 from Syntrophotalea carbinolica (strain DSM 2380 / NBRC 103641 / GraBd1) (Pelobacter carbinolicus).